Reading from the N-terminus, the 248-residue chain is Myelin protein P0 (248 aa).

Residues 1-28 form the signal peptide; it reads MAPGAPSSSPSPILAALLFSSLVLSPVQ. The Extracellular segment spans residues 29-155; that stretch reads AIVVYTDKEV…VFEKVPTRYG (127 aa). Positions 30 to 143 constitute an Ig-like V-type domain; the sequence is IVVYTDKEVH…DIVGKTSQVT (114 aa). Residues cysteine 50 and cysteine 127 are joined by a disulfide bond. N-linked (GlcNAc...) (complex) asparagine glycosylation occurs at asparagine 122. The chain crosses the membrane as a helical span at residues 156 to 176; the sequence is VVLGAVIGGVLGVVLLALLLF. Topologically, residues 177-248 are cytoplasmic; it reads YLIRYCWLRR…GLGESRKDKK (72 aa). At serine 210 the chain carries Phosphoserine; by PKC. The segment at 224-248 is disordered; the sequence is DHSRSTKAASEKKTKGLGESRKDKK. Serine 226 and serine 228 each carry phosphoserine. Serine 233 and serine 243 each carry phosphoserine; by PKC.

The protein belongs to the myelin P0 protein family. In terms of assembly, homodimer and homotetramer. Post-translationally, N-glycosylated; contains sulfate-substituted glycan. As to expression, found only in peripheral nervous system Schwann cells.

It localises to the cell membrane. Its function is as follows. Is an adhesion molecule necessary for normal myelination in the peripheral nervous system. It mediates adhesion between adjacent myelin wraps and ultimately drives myelin compaction. The chain is Myelin protein P0 (MPZ) from Bos taurus (Bovine).